The chain runs to 137 residues: Probable histone H2AXa (137 aa).

Gly residues predominate over residues 1–10 (MSSSQGGGGR). Residues 1–21 (MSSSQGGGGRGKAKTTKAVSR) form a disordered region. Serine 134 carries the post-translational modification Phosphoserine; by ATM and ATR. Positions 134–135 (SQ) match the [ST]-Q motif motif.

This sequence belongs to the histone H2A family. As to quaternary structure, the nucleosome is a histone octamer containing two molecules each of H2A, H2B, H3 and H4 assembled in one H3-H4 heterotetramer and two H2A-H2B heterodimers. The octamer wraps approximately 147 bp of DNA. Interacts with numerous proteins required for DNA damage signaling and repair when phosphorylated on Ser-134. Post-translationally, phosphorylated to form H2AXS139ph (gamma-H2AX) in response to DNA double strand breaks (DSBs) generated by exogenous genotoxic agents and by stalled replication forks, and may also occur during meiotic recombination events. Phosphorylation can extend up to several thousand nucleosomes from the actual site of the DSB and may mark the surrounding chromatin for recruitment of proteins required for DNA damage signaling and repair. Widespread phosphorylation may also serve to amplify the damage signal or aid repair of persistent lesions. H2AXS139ph in response to ionizing radiation is mediated by ATM while defects in DNA replication induce H2AXS139ph subsequent to activation of ATR. Dephosphorylation of H2AXS139ph by PP2A is required for DNA DSB repair.

The protein localises to the nucleus. The protein resides in the chromosome. In terms of biological role, variant histone H2A which replaces conventional H2A in a subset of nucleosomes. Nucleosomes wrap and compact DNA into chromatin, limiting DNA accessibility to the cellular machineries which require DNA as a template. Histones thereby play a central role in transcription regulation, DNA repair, DNA replication and chromosomal stability. DNA accessibility is regulated via a complex set of post-translational modifications of histones, also called histone code, and nucleosome remodeling. Required for checkpoint-mediated arrest of cell cycle progression in response to low doses of ionizing radiation and for efficient repair of DNA double strand breaks (DSBs) specifically when modified by C-terminal phosphorylation. The protein is Probable histone H2AXa of Oryza sativa subsp. indica (Rice).